A 491-amino-acid chain; its full sequence is 2-aminomuconic 6-semialdehyde dehydrogenase (491 aa).

Residues glutamate 252 and cysteine 286 contribute to the active site.

This sequence belongs to the aldehyde dehydrogenase family. Homotrimer.

It catalyses the reaction 2-aminomuconate 6-semialdehyde + NAD(+) + H2O = (2Z,4E)-2-aminomuconate + NADH + 2 H(+). With respect to regulation, strongly inhibited by Ag(+) and Hg(+), and comnpletely inhibited by p-chloromercuribenzoic acid. Its function is as follows. Involved in the modified meta-cleavage pathway for 2-aminophenol catabolism. The enzyme is also active toward 2-hydroxymuconic 6-semialdehyde, acetaldehyde, propionaldehyde, and butyraldehyde. This chain is 2-aminomuconic 6-semialdehyde dehydrogenase (amnC), found in Pseudomonas sp.